The primary structure comprises 124 residues: Large ribosomal subunit protein eL31 (124 aa).

It belongs to the eukaryotic ribosomal protein eL31 family. As to quaternary structure, component of the large ribosomal subunit.

Its subcellular location is the cytoplasm. Functionally, component of the large ribosomal subunit. The ribosome is a large ribonucleoprotein complex responsible for the synthesis of proteins in the cell. The protein is Large ribosomal subunit protein eL31 (rpl31) of Paralichthys olivaceus (Bastard halibut).